Consider the following 227-residue polypeptide: Transcriptional regulatory protein TdiR (227 aa).

Positions 11–125 constitute a Response regulatory domain; it reads TVFVVDDEAS…DLLDAVNAAL (115 aa). D60 carries the post-translational modification 4-aspartylphosphate. Residues 141–206 enclose the HTH luxR-type domain; it reads HLDLLATLSQ…DLMHFVMRGS (66 aa). The H-T-H motif DNA-binding region spans 165 to 184; the sequence is SKEIAKLLGISYKTVEAHRG.

Phosphorylated by TdiS.

In terms of biological role, member of the two-component regulatory system TdiR/TdiS, which probably regulates transcription of toluene catabolic genes (bss operon). Binds to DNA. This Thauera aromatica protein is Transcriptional regulatory protein TdiR (tdiR).